The chain runs to 177 residues: Acireductone dioxygenase (177 aa).

Positions 97, 99, 103, and 141 each coordinate Fe(2+). His-97, His-99, Glu-103, and His-141 together coordinate Ni(2+).

The protein belongs to the acireductone dioxygenase (ARD) family. Monomer. It depends on Fe(2+) as a cofactor. The cofactor is Ni(2+).

The catalysed reaction is 1,2-dihydroxy-5-(methylsulfanyl)pent-1-en-3-one + O2 = 3-(methylsulfanyl)propanoate + CO + formate + 2 H(+). It catalyses the reaction 1,2-dihydroxy-5-(methylsulfanyl)pent-1-en-3-one + O2 = 4-methylsulfanyl-2-oxobutanoate + formate + 2 H(+). The protein operates within amino-acid biosynthesis; L-methionine biosynthesis via salvage pathway; L-methionine from S-methyl-5-thio-alpha-D-ribose 1-phosphate: step 5/6. Functionally, catalyzes 2 different reactions between oxygen and the acireductone 1,2-dihydroxy-3-keto-5-methylthiopentene (DHK-MTPene) depending upon the metal bound in the active site. Fe-containing acireductone dioxygenase (Fe-ARD) produces formate and 2-keto-4-methylthiobutyrate (KMTB), the alpha-ketoacid precursor of methionine in the methionine recycle pathway. Ni-containing acireductone dioxygenase (Ni-ARD) produces methylthiopropionate, carbon monoxide and formate, and does not lie on the methionine recycle pathway. The polypeptide is Acireductone dioxygenase (Leptospira biflexa serovar Patoc (strain Patoc 1 / ATCC 23582 / Paris)).